The sequence spans 348 residues: MSQYKTGLLLIHPAVTTTPELVENTKAQAASKKVKFVDQFLINKLNDGSITLENAKYETVHYLTPEAQTDIKFPKKLISVLADSLKPNGSLIGLSDIYKVDALINGFEIINEPDYCWIKMDSSKLNQTVSIPLKKKKTNNTKLQSGSKLPTFKKASSSTSNLPSFKKADHSRQPIVKETDSFKPPSFKMATEPKVYRVVDDLIEDSDDDDFSSDSSKAQYFDQVDTSDDSIEEEELIDEDGSGKSMITMITCGKSKTKKKKACKDCTCGMKEQEGKEINDIRSQQDKVVKFTEDELTEIDFTIDGKKVGGCGSCSLGDAFRCSGCPYLGLPAFKPGQPINLDSISDDL.

Residues M1–L162 are N-terminal SAM-like domain. A disordered region spans residues K137 to H170. Over residues Q144 to P163 the composition is skewed to polar residues. Residues P163–S242 are linker. S206 is subject to Phosphoserine. C252, C263, C266, and C268 together coordinate [2Fe-2S] cluster. Positions C252 to C268 are fe-S binding site A. [4Fe-4S] cluster-binding residues include C311, C314, C322, and C325. Short sequence motifs (cx2C motif) lie at residues C311–C314 and C322–C325. Positions C311–C325 are fe-S binding site B.

The protein belongs to the anamorsin family. Monomer. Interacts with TAH18. Interacts with MIA40. The cofactor is [2Fe-2S] cluster. [4Fe-4S] cluster serves as cofactor.

Its subcellular location is the cytoplasm. It is found in the mitochondrion intermembrane space. Its function is as follows. Component of the cytosolic iron-sulfur (Fe-S) protein assembly (CIA) machinery required for the maturation of extramitochondrial Fe-S proteins. Part of an electron transfer chain functioning in an early step of cytosolic Fe-S biogenesis, facilitating the de novo assembly of a [4Fe-4S] cluster on the scaffold complex CFD1-NBP35. Electrons are transferred to DRE2 from NADPH via the FAD- and FMN-containing protein TAH18. TAH18-DRE2 are also required for the assembly of the diferric tyrosyl radical cofactor of ribonucleotide reductase (RNR), probably by providing electrons for reduction during radical cofactor maturation in the catalytic small subunit RNR2. This is Fe-S cluster assembly protein DRE2 from Saccharomyces cerevisiae (strain Lalvin EC1118 / Prise de mousse) (Baker's yeast).